The sequence spans 202 residues: Small ribosomal subunit protein uS5 (202 aa).

The S5 DRBM domain occupies 50–113 (LKQELLNLNL…REAKLNITPV (64 aa)).

The protein belongs to the universal ribosomal protein uS5 family. As to quaternary structure, part of the 30S ribosomal subunit. Contacts protein S4.

Functionally, with S4 and S12 plays an important role in translational accuracy. This Pyrobaculum calidifontis (strain DSM 21063 / JCM 11548 / VA1) protein is Small ribosomal subunit protein uS5.